We begin with the raw amino-acid sequence, 358 residues long: UDP-N-acetylglucosamine--N-acetylmuramyl-(pentapeptide) pyrophosphoryl-undecaprenol N-acetylglucosamine transferase (358 aa).

The UDP-N-acetyl-alpha-D-glucosamine site is built by S197 and Q288.

Belongs to the glycosyltransferase 28 family. MurG subfamily.

The protein localises to the cell membrane. It carries out the reaction Mur2Ac(oyl-L-Ala-gamma-D-Glu-L-Lys-D-Ala-D-Ala)-di-trans,octa-cis-undecaprenyl diphosphate + UDP-N-acetyl-alpha-D-glucosamine = beta-D-GlcNAc-(1-&gt;4)-Mur2Ac(oyl-L-Ala-gamma-D-Glu-L-Lys-D-Ala-D-Ala)-di-trans,octa-cis-undecaprenyl diphosphate + UDP + H(+). It participates in cell wall biogenesis; peptidoglycan biosynthesis. Its function is as follows. Cell wall formation. Catalyzes the transfer of a GlcNAc subunit on undecaprenyl-pyrophosphoryl-MurNAc-pentapeptide (lipid intermediate I) to form undecaprenyl-pyrophosphoryl-MurNAc-(pentapeptide)GlcNAc (lipid intermediate II). This Streptococcus agalactiae serotype Ia (strain ATCC 27591 / A909 / CDC SS700) protein is UDP-N-acetylglucosamine--N-acetylmuramyl-(pentapeptide) pyrophosphoryl-undecaprenol N-acetylglucosamine transferase.